The chain runs to 458 residues: UDP-N-acetylmuramoylalanine--D-glutamate ligase (458 aa).

ATP is bound at residue 124-130; that stretch reads GSDGKTT.

This sequence belongs to the MurCDEF family.

It localises to the cytoplasm. The enzyme catalyses UDP-N-acetyl-alpha-D-muramoyl-L-alanine + D-glutamate + ATP = UDP-N-acetyl-alpha-D-muramoyl-L-alanyl-D-glutamate + ADP + phosphate + H(+). It participates in cell wall biogenesis; peptidoglycan biosynthesis. Functionally, cell wall formation. Catalyzes the addition of glutamate to the nucleotide precursor UDP-N-acetylmuramoyl-L-alanine (UMA). This is UDP-N-acetylmuramoylalanine--D-glutamate ligase from Clostridium novyi (strain NT).